Reading from the N-terminus, the 101-residue chain is Small ribosomal subunit protein uS14 (101 aa).

Belongs to the universal ribosomal protein uS14 family. As to quaternary structure, part of the 30S ribosomal subunit. Contacts proteins S3 and S10.

In terms of biological role, binds 16S rRNA, required for the assembly of 30S particles and may also be responsible for determining the conformation of the 16S rRNA at the A site. In Janthinobacterium sp. (strain Marseille) (Minibacterium massiliensis), this protein is Small ribosomal subunit protein uS14.